Reading from the N-terminus, the 817-residue chain is MPALVVSPDLVRGAAGASAAPTPAPAAATPGRTVRDVTSPVEVRPVEPSSPAAQVPMAPARPAAATGQASPAAAAPASAAPAASASPADATARKPGSTEVRALRIRGTRSVELVAEGDAELQRDDILLTADALTYREPTDEALAEGNVRLRQGPDVISGPSASLVVGERTGDFQSPRYEITRTKAGLEPGDPPRQVSGGGHADVLHFEGENQYRLENATWSTCSVDDPDWYIKARDLQLDYDREIGVAKGGTVVFKDVPFFWMPWAEFPLVGQRQSGVLPPTIGSSNKTGLDLTVPYYWNIAPNYDATITPRYMGRRGLQLGGEFRYLGDSYAGEVRAEWLGRDRITGEQRTLGSLQHRQQITSSLYGSLDINGVSDDDYFEDLSSRVSVASRVNLLREGRLVYVGSPWWSASALVQSYQTLNSDPDNPVTTPYRRVPQLLTTASRPDLPAGLTFNWHGEYVQFAHPDEDHPEGNRFTAYPQLSLPMQRAGFYVTPKVGVHYTRYDLDEPVAGLTDARTSITRTVPIFSVDSGVTFERDAQFFGTAFTQTLEPRLYYLNVPYRRQNDIPLFDTSRYDFGFAQIFAENRYTGGDRIGDANQLTAAVTTRLIDPETGSERMRALVGQRYYFEDQRVTAGEALRTSRRTDVLGGFSGRITRYSTVDTLLQYNPEDNETERFNFTFRYQPEFAKALNLGYRYARSLVSPDGTIGLRDVNVSGQWPLGGGWYGVGRLTHSLKDDRLTEAIAGIEYDGGCWVARVAMHRFATDPNDVTKAVFIQLELNDLASIGSSPVNLIKRSVPGYGKINDPAANRVFGIE.

The signal sequence occupies residues 1 to 26; the sequence is MPALVVSPDLVRGAAGASAAPTPAPA. Positions 1–101 are disordered; the sequence is MPALVVSPDL…ARKPGSTEVR (101 aa). Over residues 13–90 the composition is skewed to low complexity; sequence GAAGASAAPT…PAASASPADA (78 aa).

Belongs to the LptD family. Component of the lipopolysaccharide transport and assembly complex. Interacts with LptE and LptA.

The protein resides in the cell outer membrane. In terms of biological role, together with LptE, is involved in the assembly of lipopolysaccharide (LPS) at the surface of the outer membrane. This chain is LPS-assembly protein LptD, found in Azoarcus sp. (strain BH72).